Here is a 331-residue protein sequence, read N- to C-terminus: DNA-directed RNA polymerase subunit alpha (331 aa).

The tract at residues 1–226 is alpha N-terminal domain (alpha-NTD); the sequence is MLIAQRPTLT…ELFGLARELN (226 aa). Residues 243 to 331 form an alpha C-terminal domain (alpha-CTD) region; that stretch reads LSSELSMPIE…SYDEDETTTN (89 aa).

Belongs to the RNA polymerase alpha chain family. In terms of assembly, homodimer. The RNAP catalytic core consists of 2 alpha, 1 beta, 1 beta' and 1 omega subunit. When a sigma factor is associated with the core the holoenzyme is formed, which can initiate transcription.

The catalysed reaction is RNA(n) + a ribonucleoside 5'-triphosphate = RNA(n+1) + diphosphate. In terms of biological role, DNA-dependent RNA polymerase catalyzes the transcription of DNA into RNA using the four ribonucleoside triphosphates as substrates. In Clavibacter sepedonicus (Clavibacter michiganensis subsp. sepedonicus), this protein is DNA-directed RNA polymerase subunit alpha.